Here is a 353-residue protein sequence, read N- to C-terminus: Histidinol-phosphate aminotransferase (353 aa).

The residue at position 218 (Lys-218) is an N6-(pyridoxal phosphate)lysine.

Belongs to the class-II pyridoxal-phosphate-dependent aminotransferase family. Histidinol-phosphate aminotransferase subfamily. In terms of assembly, homodimer. Pyridoxal 5'-phosphate serves as cofactor.

It carries out the reaction L-histidinol phosphate + 2-oxoglutarate = 3-(imidazol-4-yl)-2-oxopropyl phosphate + L-glutamate. The protein operates within amino-acid biosynthesis; L-histidine biosynthesis; L-histidine from 5-phospho-alpha-D-ribose 1-diphosphate: step 7/9. The chain is Histidinol-phosphate aminotransferase from Synechococcus sp. (strain JA-2-3B'a(2-13)) (Cyanobacteria bacterium Yellowstone B-Prime).